The sequence spans 89 residues: Acylphosphatase (89 aa).

The 87-residue stretch at 3–89 (ALFIKISGRV…QNFTSFDIVP (87 aa)) folds into the Acylphosphatase-like domain. Catalysis depends on residues Arg-18 and Asn-36.

Belongs to the acylphosphatase family.

The catalysed reaction is an acyl phosphate + H2O = a carboxylate + phosphate + H(+). The protein is Acylphosphatase (acyP) of Pseudothermotoga lettingae (strain ATCC BAA-301 / DSM 14385 / NBRC 107922 / TMO) (Thermotoga lettingae).